A 267-amino-acid polypeptide reads, in one-letter code: Type II pantothenate kinase (267 aa).

Asp-6–Lys-13 lines the ATP pocket. Glu-70 (proton acceptor) is an active-site residue. ATP contacts are provided by residues Thr-99, Gly-121 to Gln-125, Tyr-137, and Ser-225.

This sequence belongs to the type II pantothenate kinase family. In terms of assembly, homodimer.

Its subcellular location is the cytoplasm. The enzyme catalyses (R)-pantothenate + ATP = (R)-4'-phosphopantothenate + ADP + H(+). It participates in cofactor biosynthesis; coenzyme A biosynthesis; CoA from (R)-pantothenate: step 1/5. Catalyzes the phosphorylation of pantothenate (Pan), the first step in CoA biosynthesis. The protein is Type II pantothenate kinase of Staphylococcus aureus (strain Mu50 / ATCC 700699).